The primary structure comprises 246 residues: Ribonuclease 3 (246 aa).

The RNase III domain occupies 10–143 (LERLEQALDY…LLGAIYLDGG (134 aa)). Glutamate 56 provides a ligand contact to Mg(2+). Aspartate 60 is an active-site residue. Positions 129 and 132 each coordinate Mg(2+). Glutamate 132 is a catalytic residue. In terms of domain architecture, DRBM spans 170–239 (DYKTLLQEYL…AQQALELLIE (70 aa)).

This sequence belongs to the ribonuclease III family. Homodimer. Mg(2+) serves as cofactor.

The protein localises to the cytoplasm. It carries out the reaction Endonucleolytic cleavage to 5'-phosphomonoester.. Its function is as follows. Digests double-stranded RNA. Involved in the processing of primary rRNA transcript to yield the immediate precursors to the large and small rRNAs (23S and 16S). Processes some mRNAs, and tRNAs when they are encoded in the rRNA operon. Processes pre-crRNA and tracrRNA of type II CRISPR loci if present in the organism. This Magnetococcus marinus (strain ATCC BAA-1437 / JCM 17883 / MC-1) protein is Ribonuclease 3.